Consider the following 327-residue polypeptide: Protein MRG2 (327 aa).

Positions 1 to 40 are disordered; it reads MGSPNAAAETDLTTDDFIGDTRRDSGSDTETNTDCDGEDL. The Tudor-knot domain occupies 52-101; that stretch reads FEEGERVLAKHSDCFYEAKVLKVEFKDNEWKYFVHYIGWNKSWDEWIRLD. The segment at 133 to 156 is disordered; the sequence is SKMKPRSPNVARGRKRKQDSVDTE. The region spanning 162-327 is the MRG domain; sequence SDNLLSFNIP…AVEEMEKKEG (166 aa).

In terms of assembly, interacts with HAM1 and HAM2. Interacts (via MRG domain) with CO. Component of the NuA4 histone acetyltransferase complex. In terms of tissue distribution, ubiquitous. Mainly expressed in the vasculature of cotyledons and leaves, and in roots and inflorescences.

The protein resides in the nucleus. Chromatin remodeling factor. Acts as a 'reader' protein by binding to H3K4me3 and H3K36me3 to control histone H4 acetylation. Increases the transcriptional levels of the flowering time genes FLC and FT. Binds the chromatin at the FT promoter upon interaction with CO. The protein is Protein MRG2 of Arabidopsis thaliana (Mouse-ear cress).